Consider the following 226-residue polypeptide: Cytidylate kinase (226 aa).

Residue 10-18 (GPAGAGKST) coordinates ATP.

This sequence belongs to the cytidylate kinase family. Type 1 subfamily.

Its subcellular location is the cytoplasm. The enzyme catalyses CMP + ATP = CDP + ADP. It catalyses the reaction dCMP + ATP = dCDP + ADP. The protein is Cytidylate kinase of Caldicellulosiruptor bescii (strain ATCC BAA-1888 / DSM 6725 / KCTC 15123 / Z-1320) (Anaerocellum thermophilum).